The chain runs to 160 residues: Transcriptional repressor NrdR (160 aa).

A zinc finger spans residues 3-34 (CPYCQYEDTQVKDSRPAEEGAVIRRRRVCSVC). The region spanning 49–139 (LLITKKNGRC…VYRDFRNASD (91 aa)) is the ATP-cone domain.

This sequence belongs to the NrdR family. The cofactor is Zn(2+).

Negatively regulates transcription of bacterial ribonucleotide reductase nrd genes and operons by binding to NrdR-boxes. This is Transcriptional repressor NrdR from Bartonella tribocorum (strain CIP 105476 / IBS 506).